Here is a 400-residue protein sequence, read N- to C-terminus: Elongation factor Tu (400 aa).

A tr-type G domain is found at 10–210 (KPHCNVGTIG…VDTYIPIPPR (201 aa)). The tract at residues 19-26 (GHVDHGKT) is G1. 19-26 (GHVDHGKT) is a binding site for GTP. Residue T26 participates in Mg(2+) binding. The G2 stretch occupies residues 60–64 (GLTIA). The tract at residues 81 to 84 (DCPG) is G3. GTP-binding positions include 81–85 (DCPGH) and 136–139 (NKCD). The tract at residues 136-139 (NKCD) is G4. The tract at residues 174–176 (SAI) is G5.

The protein belongs to the TRAFAC class translation factor GTPase superfamily. Classic translation factor GTPase family. EF-Tu/EF-1A subfamily. Monomer.

It is found in the cytoplasm. It carries out the reaction GTP + H2O = GDP + phosphate + H(+). In terms of biological role, GTP hydrolase that promotes the GTP-dependent binding of aminoacyl-tRNA to the A-site of ribosomes during protein biosynthesis. This Dehalococcoides mccartyi (strain CBDB1) protein is Elongation factor Tu.